Consider the following 643-residue polypeptide: Coiled-coil domain-containing protein 8 (643 aa).

The tract at residues 93–124 is disordered; the sequence is VGTYDSSNGSDSELSDFDTSKVKGNRGSGKTR. Residues Ser-141 and Ser-144 each carry the phosphoserine modification. Disordered stretches follow at residues 156–191, 206–492, 519–540, 553–577, and 603–643; these read RRGEKKPSAPPPRRRVNLPVPMFENNLGPQPSKGDR, QRVR…TPRA, IDSQRAEGPVNQSTGATENQRV, DQREEAGPQAILEASADSGSRARKQ, and PRLP…EEQL. The segment covering 218–227 has biased composition (polar residues); it reads EVGQAQQSSI. Basic and acidic residues predominate over residues 230-247; that stretch reads RAGEMRHSHTSPDLDDSS. Over residues 248-259 the composition is skewed to polar residues; that stretch reads RNTGDLSDQTLI. A compositionally biased stretch (basic residues) spans 261 to 276; it reads RRWKPKIKWVSLRRCR. Low complexity-rich tracts occupy residues 294 to 399, 409 to 432, and 459 to 473; these read AAEN…AEAA, NPRTEAAANPRAEAAVNPRAEATA, and RVEAAASLRVEAAAS. Polar residues predominate over residues 528–537; it reads VNQSTGATEN. Residues 603–609 carry the PxLPxI/L motif; mediates interaction with ANKRA2 motif; sequence PRLPTLP. The segment covering 626–643 has biased composition (basic and acidic residues); it reads LRADTRADMEHREQEEQL.

As to quaternary structure, component of the 3M complex, composed of core components CUL7, CCDC8 and OBSL1. Interacts (via PxLPxI/L motif) with ANKRA2 (via ankyrin repeats); may link the 3M complex to histone deacetylases including HDAC4 and HDAC5.

Its subcellular location is the cytoplasm. It is found in the cytoskeleton. It localises to the microtubule organizing center. The protein localises to the centrosome. Its function is as follows. Core component of the 3M complex, a complex required to regulate microtubule dynamics and genome integrity. It is unclear how the 3M complex regulates microtubules, it could act by controlling the level of a microtubule stabilizer. Required for localization of CUL7 to the centrosome. The protein is Coiled-coil domain-containing protein 8 (Ccdc8) of Rattus norvegicus (Rat).